A 186-amino-acid polypeptide reads, in one-letter code: Akirin-1A (186 aa).

Positions 14–65 are disordered; sequence EALMSPQSPKRRRCAPLPGSPATPSPQRCAIRPEMQQGQQQPLSQLGGDRRL. Over residues 49 to 60 the composition is skewed to low complexity; it reads QQGQQQPLSQLG. Positions 183 to 186 match the SYVS motif motif; it reads SYVS.

This sequence belongs to the akirin family.

It localises to the nucleus. In terms of biological role, molecular adapter that acts as a bridge between proteins, and which is involved skeletal muscle development. Functions as a signal transducer for MSTN during skeletal muscle regeneration and myogenesis. The sequence is that of Akirin-1A (akirin1-a) from Xenopus laevis (African clawed frog).